We begin with the raw amino-acid sequence, 165 residues long: Cyclic pyranopterin monophosphate synthase (165 aa).

Residues 83–85 and 120–121 contribute to the substrate site; these read FCH and ME. The active site involves Asp135.

Belongs to the MoaC family. In terms of assembly, homohexamer; trimer of dimers.

It catalyses the reaction (8S)-3',8-cyclo-7,8-dihydroguanosine 5'-triphosphate = cyclic pyranopterin phosphate + diphosphate. The protein operates within cofactor biosynthesis; molybdopterin biosynthesis. Functionally, catalyzes the conversion of (8S)-3',8-cyclo-7,8-dihydroguanosine 5'-triphosphate to cyclic pyranopterin monophosphate (cPMP). The chain is Cyclic pyranopterin monophosphate synthase from Xanthomonas campestris pv. campestris (strain 8004).